A 919-amino-acid chain; its full sequence is DNA double-strand break repair Rad50 ATPase (919 aa).

ATP-binding positions include 33–39 (NGAGKST) and Q143. Coiled-coil stretches lie at residues 208–268 (MTLR…MLVN), 315–379 (HEVA…RRYT), and 414–458 (ESVL…LEES). Residues 417–516 (LERLDAVIND…EASRLQDKRR (100 aa)) enclose the Zinc-hook domain. Residues C464 and C467 each contribute to the Zn(2+) site. Coiled coils occupy residues 486–515 (EAERLRKAAKEKAAEAEKARAEASRLQDKR), 541–595 (EDLA…LQRL), and 635–749 (AYRS…RKAS).

The protein belongs to the SMC family. RAD50 subfamily. As to quaternary structure, homodimer. Forms a heterotetramer composed of two Mre11 subunits and two Rad50 subunits. Requires Zn(2+) as cofactor.

Functionally, part of the Rad50/Mre11 complex, which is involved in the early steps of DNA double-strand break (DSB) repair. The complex may facilitate opening of the processed DNA ends to aid in the recruitment of HerA and NurA. Rad50 controls the balance between DNA end bridging and DNA resection via ATP-dependent structural rearrangements of the Rad50/Mre11 complex. In Aeropyrum pernix (strain ATCC 700893 / DSM 11879 / JCM 9820 / NBRC 100138 / K1), this protein is DNA double-strand break repair Rad50 ATPase.